Consider the following 469-residue polypeptide: Mitochondrial distribution and morphology protein 10 (469 aa).

The protein belongs to the MDM10 family. In terms of assembly, component of the ER-mitochondria encounter structure (ERMES) or MDM complex, composed of MMM1, MDM10, MDM12 and MDM34. Associates with the mitochondrial outer membrane sorting assembly machinery SAM(core) complex.

It is found in the mitochondrion outer membrane. Its function is as follows. Component of the ERMES/MDM complex, which serves as a molecular tether to connect the endoplasmic reticulum and mitochondria. Components of this complex are involved in the control of mitochondrial shape and protein biogenesis and may function in phospholipid exchange. MDM10 is involved in the late assembly steps of the general translocase of the mitochondrial outer membrane (TOM complex). Functions in the TOM40-specific route of the assembly of outer membrane beta-barrel proteins, including the association of TOM40 with the receptor TOM22 and small TOM proteins. Can associate with the SAM(core) complex as well as the MDM12-MMM1 complex, both involved in late steps of the major beta-barrel assembly pathway, that is responsible for biogenesis of all outer membrane beta-barrel proteins. May act as a switch that shuttles between both complexes and channels precursor proteins into the TOM40-specific pathway. Plays a role in mitochondrial morphology and in the inheritance of mitochondria. This Scheffersomyces stipitis (strain ATCC 58785 / CBS 6054 / NBRC 10063 / NRRL Y-11545) (Yeast) protein is Mitochondrial distribution and morphology protein 10.